The following is a 168-amino-acid chain: I-Kappa-B like protein G2 (168 aa).

ANK repeat units follow at residues 56–88 (SQRQ…DING) and 93–123 (GGNT…NKTA).

It belongs to the polydnaviridae I-Kappa-B-like protein family.

Suppresses the host immune response through NF-kappa-B inactivation. Possesses ankyrin repeat domains required for NF-kappa-B binding but lacks the regulatory regions required for dissociation from NF-kappa-B and degradation. Therefore, prevents host NF-kappa-B release and subsequent activation. The sequence is that of I-Kappa-B like protein G2 (G4) from Microplitis demolitor (Parasitoid wasp).